We begin with the raw amino-acid sequence, 280 residues long: Bis(5'-nucleosyl)-tetraphosphatase, symmetrical (280 aa).

The protein belongs to the Ap4A hydrolase family.

The catalysed reaction is P(1),P(4)-bis(5'-adenosyl) tetraphosphate + H2O = 2 ADP + 2 H(+). Functionally, hydrolyzes diadenosine 5',5'''-P1,P4-tetraphosphate to yield ADP. This Shigella flexneri serotype 5b (strain 8401) protein is Bis(5'-nucleosyl)-tetraphosphatase, symmetrical.